A 158-amino-acid polypeptide reads, in one-letter code: Transcription elongation factor GreA (158 aa).

The stretch at 45–72 (AEYHAAREQQSFIEGRIKQLEGELSHAE) forms a coiled coil.

This sequence belongs to the GreA/GreB family.

Necessary for efficient RNA polymerase transcription elongation past template-encoded arresting sites. The arresting sites in DNA have the property of trapping a certain fraction of elongating RNA polymerases that pass through, resulting in locked ternary complexes. Cleavage of the nascent transcript by cleavage factors such as GreA or GreB allows the resumption of elongation from the new 3'terminus. GreA releases sequences of 2 to 3 nucleotides. In Xanthomonas campestris pv. campestris (strain ATCC 33913 / DSM 3586 / NCPPB 528 / LMG 568 / P 25), this protein is Transcription elongation factor GreA.